Consider the following 947-residue polypeptide: Valine--tRNA ligase (947 aa).

A 'HIGH' region motif is present at residues proline 45–histidine 55. The 'KMSKS' region signature appears at lysine 591–serine 595. ATP is bound at residue lysine 594. A coiled-coil region spans residues aspartate 879–valine 943.

Belongs to the class-I aminoacyl-tRNA synthetase family. ValS type 1 subfamily. In terms of assembly, monomer.

The protein localises to the cytoplasm. The catalysed reaction is tRNA(Val) + L-valine + ATP = L-valyl-tRNA(Val) + AMP + diphosphate. Functionally, catalyzes the attachment of valine to tRNA(Val). As ValRS can inadvertently accommodate and process structurally similar amino acids such as threonine, to avoid such errors, it has a 'posttransfer' editing activity that hydrolyzes mischarged Thr-tRNA(Val) in a tRNA-dependent manner. In Agrobacterium fabrum (strain C58 / ATCC 33970) (Agrobacterium tumefaciens (strain C58)), this protein is Valine--tRNA ligase.